The chain runs to 500 residues: Glycerol kinase (500 aa).

Threonine 17 lines the ADP pocket. Positions 17, 18, and 19 each coordinate ATP. Threonine 17 provides a ligand contact to sn-glycerol 3-phosphate. Arginine 21 lines the ADP pocket. Residues arginine 87, glutamate 88, tyrosine 139, and aspartate 243 each contribute to the sn-glycerol 3-phosphate site. 5 residues coordinate glycerol: arginine 87, glutamate 88, tyrosine 139, aspartate 243, and glutamine 244. 2 residues coordinate ADP: threonine 265 and glycine 308. Positions 265, 308, 312, and 409 each coordinate ATP. Residues glycine 409 and asparagine 413 each contribute to the ADP site.

This sequence belongs to the FGGY kinase family.

The enzyme catalyses glycerol + ATP = sn-glycerol 3-phosphate + ADP + H(+). Its pathway is polyol metabolism; glycerol degradation via glycerol kinase pathway; sn-glycerol 3-phosphate from glycerol: step 1/1. Its activity is regulated as follows. Inhibited by fructose 1,6-bisphosphate (FBP). Its function is as follows. Key enzyme in the regulation of glycerol uptake and metabolism. Catalyzes the phosphorylation of glycerol to yield sn-glycerol 3-phosphate. The polypeptide is Glycerol kinase (Pseudomonas fluorescens (strain Pf0-1)).